We begin with the raw amino-acid sequence, 147 residues long: Hemoglobin subunit epsilon (147 aa).

The Globin domain maps to 3–147 (HFTAEEKAAV…VAIALAHKYH (145 aa)). Ser-14 and Ser-51 each carry phosphoserine. Residues His-64 and His-93 each coordinate heme b.

The protein belongs to the globin family. Heterotetramer of two alpha chains and two epsilon chains in early embryonic hemoglobin Gower-2; two zeta chains and two epsilon chains in early embryonic hemoglobin Gower-1. As to expression, red blood cells.

Functionally, the epsilon chain is a beta-type chain of early mammalian embryonic hemoglobin. The protein is Hemoglobin subunit epsilon (HBE1) of Pan paniscus (Pygmy chimpanzee).